Reading from the N-terminus, the 1384-residue chain is ATP-dependent RNA helicase TDRD9 (1384 aa).

The interval 35–60 is disordered; that stretch reads EAPREEVQRSEEVPSEAPTAQAQDPV. Positions 36–46 are enriched in basic and acidic residues; that stretch reads APREEVQRSEE. In terms of domain architecture, Helicase ATP-binding spans 144 to 310; it reads ISLIESNSVV…FAVPVQNKMN (167 aa). Residue 157–164 coordinates ATP; it reads GATGSGKS. Positions 256 to 259 match the DEAH box motif; it reads DEVH. The Helicase C-terminal domain maps to 379 to 546; the sequence is SGAQFVSERS…VLKVKLLDMG (168 aa). Positions 946–1006 constitute a Tudor domain; it reads HPHPDLVCLA…REIPCQLLEL (61 aa).

It belongs to the DEAD box helicase family. DEAH subfamily. As to quaternary structure, interacts with piRNA-associated proteins PIWIL1 and PIWIL4.

Its subcellular location is the cytoplasm. It localises to the nucleus. The enzyme catalyses ATP + H2O = ADP + phosphate + H(+). ATP-binding RNA helicase which plays a central role during spermatogenesis by repressing transposable elements and preventing their mobilization, which is essential for the germline integrity. Acts via the piRNA metabolic process, which mediates the repression of transposable elements during meiosis by forming complexes composed of piRNAs and Piwi proteins and governs the methylation and subsequent repression of transposons. Acts downstream of piRNA biogenesis: exclusively required for transposon silencing in the nucleus, suggesting that it acts as a nuclear effector in the nucleus together with PIWIL4. The protein is ATP-dependent RNA helicase TDRD9 of Rattus norvegicus (Rat).